Here is a 1087-residue protein sequence, read N- to C-terminus: Gelsolin-related protein of 125 kDa (1087 aa).

The segment at 1–40 is disordered; sequence MEEDNIVDSKEIENNVEDKKEETPSSSPSPSSSLQQQQEE. Residues 7-23 are compositionally biased toward basic and acidic residues; the sequence is VDSKEIENNVEDKKEET. A compositionally biased stretch (low complexity) spans 24-40; that stretch reads PSSSPSPSSSLQQQQEE. Gelsolin-like repeat units lie at residues 73-146, 183-286, 335-442, and 465-538; these read PFHF…PTFL, FLFK…FSKW, GKLL…FGTE, and TQLF…DNFW. Positions 550 to 598 form a coiled coil; sequence INTFINENKEEKEKEEEEKEEEEEEEEEEEEEEEEEKDNNKTTTIIKHL. The tract at residues 555–592 is disordered; that stretch reads NENKEEKEKEEEEKEEEEEEEEEEEEEEEEEKDNNKTT. A compositionally biased stretch (acidic residues) spans 562 to 586; the sequence is EKEEEEKEEEEEEEEEEEEEEEEEK. The Gelsolin-like 5 repeat unit spans residues 614 to 692; that stretch reads IFKADQINPF…EQYNESPLFK (79 aa). The stretch at 710–912 forms a coiled coil; it reads IISYKQKLAE…ETVNEENEVG (203 aa). Composition is skewed to basic and acidic residues over residues 732 to 770, 779 to 808, 817 to 840, and 849 to 900; these read KQQQ…KEEE, EEVK…KEVN, EEVK…KEEE, and EEVK…KVNE. Positions 732–1087 are disordered; sequence KQQQEQEQEQ…HNRSSSLTHA (356 aa). Residues 901-910 show a composition bias toward acidic residues; the sequence is ENETVNEENE. Composition is skewed to polar residues over residues 925–939 and 950–961; these read ANSS…NEGS and EPITPSVVSSSG. The span at 983–1002 shows a compositional bias: basic residues; the sequence is QGRKGGRKSHGKNQPQHKKN. Residues 1018–1040 are compositionally biased toward polar residues; sequence KSLNLDIDNQSFDLNSINNNNSV. Low complexity predominate over residues 1047–1065; it reads SSPLSFSSSSINSNSTHNT. Over residues 1066–1080 the composition is skewed to basic residues; that stretch reads PSKKNKNKNKKKHNR.

Belongs to the villin/gelsolin family. As to quaternary structure, interacts with rasD and abpC.

Its subcellular location is the cytoplasmic vesicle. Its function is as follows. Involved in phototaxis. Required for coupling photodetection to the locomotory machinery of slugs. May be essential in the natural environment for the propagation of spores. The sequence is that of Gelsolin-related protein of 125 kDa (gnrA) from Dictyostelium discoideum (Social amoeba).